A 61-amino-acid polypeptide reads, in one-letter code: Small ribosomal subunit protein uS14B (61 aa).

Cys24, Cys27, Cys40, and Cys43 together coordinate Zn(2+).

Belongs to the universal ribosomal protein uS14 family. Zinc-binding uS14 subfamily. As to quaternary structure, part of the 30S ribosomal subunit. Contacts proteins S3 and S10. It depends on Zn(2+) as a cofactor.

In terms of biological role, binds 16S rRNA, required for the assembly of 30S particles and may also be responsible for determining the conformation of the 16S rRNA at the A site. The polypeptide is Small ribosomal subunit protein uS14B (Pediococcus pentosaceus (strain ATCC 25745 / CCUG 21536 / LMG 10740 / 183-1w)).